We begin with the raw amino-acid sequence, 436 residues long: GTPase Der (436 aa).

EngA-type G domains follow at residues 3 to 168 and 177 to 352; these read PLIA…PESD and IRLA…DNRA. GTP-binding positions include 9 to 16, 56 to 60, 120 to 123, 183 to 190, 230 to 234, and 295 to 298; these read GRPNVGKS, DTGGY, NKVE, DTAGL, and NKWD. Residues 353-436 form the KH-like domain; the sequence is RKISTSALNR…VTISLRFLQK (84 aa).

This sequence belongs to the TRAFAC class TrmE-Era-EngA-EngB-Septin-like GTPase superfamily. EngA (Der) GTPase family. Associates with the 50S ribosomal subunit.

In terms of biological role, GTPase that plays an essential role in the late steps of ribosome biogenesis. This is GTPase Der from Chlorobium phaeovibrioides (strain DSM 265 / 1930) (Prosthecochloris vibrioformis (strain DSM 265)).